The chain runs to 418 residues: Putative ion-transport protein YfeO (418 aa).

The next 12 helical transmembrane spans lie at 10 to 30, 54 to 74, 99 to 119, 120 to 140, 149 to 169, 186 to 206, 223 to 243, 258 to 278, 300 to 320, 322 to 342, 343 to 363, and 371 to 391; these read LLLSLPAVAIGIASSLILIVV, DSPLWIIGVLTLTGIAVGLVI, ALPGLIVALILGLAGGVSLGP, EHPIMTVNIALAVAIGARLLP, ILASAGTIGALFGTPVAAALI, LFAPLMAAAAGALTTGLFFHP, ILSGAIVAAIAIAAGMVAVWC, VLVLGIGGFILGILGVIGGPV, DYFLLAVIKLAALVVAAASGF, GGRIFPAVFVGVALGLMLHEH, VPAVPAAITVSCAILGIVLVV, and LFMAAVVVPNTTLLPLLCIVM.

Belongs to the chloride channel (TC 2.A.49) family.

The protein localises to the cell membrane. In Escherichia coli (strain 55989 / EAEC), this protein is Putative ion-transport protein YfeO.